The sequence spans 307 residues: MKLIIATRKSQLALWQSEHVAQILKNTHQIEVLLEGFKTKGDVLLDSPLAKIGGKGLFTKELEESMLRKEAHLAVHSLKDVPSFFPQGLVLAAVSKREQSNDAMLSQNYKDFLSLPKGAKIGTTSLRRKMQLLLLRPDLEIISLRGNVNSRIEKLKNNDFDAIILAMAGIKRLNLDKQVNFVYEFSKDELIPAASQGALGIESINDEKILELLKCLNDENALIETSIEREFIATLEGGCQVPIGINAELLGDEICVRAVLGLPDGSEILKDKRMIKKNDFKGFGESLAKEFIAKGAKELLKKAESMI.

Cysteine 239 carries the S-(dipyrrolylmethanemethyl)cysteine modification.

This sequence belongs to the HMBS family. As to quaternary structure, monomer. It depends on dipyrromethane as a cofactor.

The catalysed reaction is 4 porphobilinogen + H2O = hydroxymethylbilane + 4 NH4(+). It functions in the pathway porphyrin-containing compound metabolism; protoporphyrin-IX biosynthesis; coproporphyrinogen-III from 5-aminolevulinate: step 2/4. In terms of biological role, tetrapolymerization of the monopyrrole PBG into the hydroxymethylbilane pre-uroporphyrinogen in several discrete steps. In Campylobacter jejuni subsp. jejuni serotype O:2 (strain ATCC 700819 / NCTC 11168), this protein is Porphobilinogen deaminase (hemC).